The sequence spans 319 residues: tRNA uridine(34) hydroxylase (319 aa).

The 99-residue stretch at 133–231 folds into the Rhodanese domain; that stretch reads EDPDSVVIDT…YLEDVSSENS (99 aa). Cys191 (cysteine persulfide intermediate) is an active-site residue.

The protein belongs to the TrhO family.

It catalyses the reaction uridine(34) in tRNA + AH2 + O2 = 5-hydroxyuridine(34) in tRNA + A + H2O. Functionally, catalyzes oxygen-dependent 5-hydroxyuridine (ho5U) modification at position 34 in tRNAs. This chain is tRNA uridine(34) hydroxylase, found in Prochlorococcus marinus (strain NATL1A).